A 292-amino-acid chain; its full sequence is AKT-interacting protein (292 aa).

Residues 1 to 11 (MNPFWSMSTSS) are compositionally biased toward polar residues. Positions 1-63 (MNPFWSMSTS…TSPAPAAQST (63 aa)) are disordered. Basic and acidic residues predominate over residues 14-23 (KRSEGEEKTL). Position 30 is a phosphoserine (Ser30). In terms of domain architecture, UBC core spans 74 to 222 (YLEYSLLAEF…VVDSVKVCTA (149 aa)).

This sequence belongs to the ubiquitin-conjugating enzyme family. FTS subfamily. As to quaternary structure, component of the FTS/Hook/FHIP complex (FHF complex), composed of AKTIP/FTS, FHIP1B, and one or more members of the Hook family of proteins HOOK1, HOOK2, and HOOK3. Interacts directly with HOOK1, HOOK2 and HOOK3. The FHF complex associates with the homotypic vesicular sorting complex (the HOPS complex). Also interacts with AKT1. May interact with FHIP1A.

Its subcellular location is the cytoplasm. It is found in the cell membrane. Functionally, component of the FTS/Hook/FHIP complex (FHF complex). The FHF complex may function to promote vesicle trafficking and/or fusion via the homotypic vesicular protein sorting complex (the HOPS complex). Regulates apoptosis by enhancing phosphorylation and activation of AKT1. Increases release of TNFSF6 via the AKT1/GSK3B/NFATC1 signaling cascade. FHF complex promotes the distribution of AP-4 complex to the perinuclear area of the cell. The protein is AKT-interacting protein of Homo sapiens (Human).